The primary structure comprises 252 residues: Phosphoglycolate phosphatase (252 aa).

Catalysis depends on D13, which acts as the Nucleophile. Residues D13, D15, and D192 each coordinate Mg(2+).

The protein belongs to the HAD-like hydrolase superfamily. CbbY/CbbZ/Gph/YieH family. Monomer. Mg(2+) serves as cofactor. It depends on chloride as a cofactor.

The catalysed reaction is 2-phosphoglycolate + H2O = glycolate + phosphate. The protein operates within organic acid metabolism; glycolate biosynthesis; glycolate from 2-phosphoglycolate: step 1/1. Specifically catalyzes the dephosphorylation of 2-phosphoglycolate. Is involved in the dissimilation of the intracellular 2-phosphoglycolate formed during the DNA repair of 3'-phosphoglycolate ends, a major class of DNA lesions induced by oxidative stress. The protein is Phosphoglycolate phosphatase of Salmonella typhimurium (strain LT2 / SGSC1412 / ATCC 700720).